The chain runs to 765 residues: Probable serine/threonine-protein kinase DDB_G0271402 (765 aa).

The Protein kinase domain maps to 35–328 (LEFGQEIGKG…KEITERLKSL (294 aa)). ATP-binding positions include 41–49 (IGKGAYGKI) and lysine 62. The active-site Proton acceptor is the aspartate 192. Disordered stretches follow at residues 371–393 (IVHN…NNSN), 443–477 (SMGD…KIIN), 491–527 (SSDL…NNNS), 545–620 (PIQI…QQYQ), 654–684 (PLNI…HHHL), 699–738 (IISS…PTNI), and 746–765 (ASNS…TVQS). A compositionally biased stretch (acidic residues) spans 446-458 (DESDLDSDDEDDS). Composition is skewed to low complexity over residues 459–470 (YTSSASSSRCNS), 499–527 (NGNN…NNNS), 562–605 (PPTS…PKSN), 662–678 (NNNN…GNVN), and 699–720 (IISS…SLTS).

It belongs to the protein kinase superfamily. TKL Ser/Thr protein kinase family.

It catalyses the reaction L-seryl-[protein] + ATP = O-phospho-L-seryl-[protein] + ADP + H(+). The enzyme catalyses L-threonyl-[protein] + ATP = O-phospho-L-threonyl-[protein] + ADP + H(+). The polypeptide is Probable serine/threonine-protein kinase DDB_G0271402 (Dictyostelium discoideum (Social amoeba)).